A 249-amino-acid polypeptide reads, in one-letter code: MAIRKEIGIIIQSKDIGESDRLISLAGETQVRMNFISKGIRKSKRRAIISTELGCLVEVDYYDQVEKDWKSTKEIHLIKRYDELKKDYVGTLFVLYLTELTSQLYPDGENHPFLYQLLSGSLEVSNENGFRKEILPFFKLRALTHMGHFPTEFYCHTCGEEVLTKAKAYFSVDSREFLCSDCHPITKDHLPVLKLFHTMLSKKFSNVLVIFPKEAEYREGDMILNQFLRSLLGRELKSYFEFYKTIGDL.

Belongs to the RecO family.

Its function is as follows. Involved in DNA repair and RecF pathway recombination. The chain is DNA repair protein RecO from Leptospira biflexa serovar Patoc (strain Patoc 1 / Ames).